Reading from the N-terminus, the 382-residue chain is MKALHFGAGNIGRGFIGKLLADAGIQLTFADVNQVVLDALNARHSYQVHVVGENEQVDTVSGVNAVSSIGDDVVDLIAHVDLITTAVGPVVLERIAPAIAKGLVKRKAQGVDAPLNIIACENMVRGTTQLKGHVMNALADGDKAWVEQHVGFVDSAVDRIVPPSASATNDPLEVTVETFSEWIVDKTQFKGALPNIPGMELTDNLMAFVERKLFTLNTGHAITAYLGKLAGHQTIRDAILDESIRAVVKGAMEESGAVLIKRYGFDADKHAAYIQKILGRFENPYLKDDVERVGRQPLRKLSAGDRLIKPLLGTLEYGLPHVNLVKGIAAAMHFRSDEDPQAQELAALITEKGPQAALAQISGLDANSDVVAEAVNAYNATK.

Residue 3-14 (ALHFGAGNIGRG) participates in NAD(+) binding.

This sequence belongs to the mannitol dehydrogenase family.

It carries out the reaction D-mannitol 1-phosphate + NAD(+) = beta-D-fructose 6-phosphate + NADH + H(+). This Salmonella newport (strain SL254) protein is Mannitol-1-phosphate 5-dehydrogenase.